Consider the following 344-residue polypeptide: L-rhamnose-proton symporter (344 aa).

A run of 10 helical transmembrane segments spans residues 4–24 (AIILGIIWHLVGAASAACFYA), 38–58 (WSIGGLVSWLILPWTVSYLLL), 68–88 (FSIATLLPVFLFGAMWGIGNI), 101–121 (MGIGIAIGITLIIGTLMTPIL), 137–157 (TLLGVFVALIGVAIVSYAGLL), 175–195 (LILAVMCGIFSAGMSFAMDAA), 207–227 (INSLYVALPSYVIIMGGGAII), 259–279 (ILFSALAGLMWYLQFFFYAWG), 290–310 (MSWMLHMSFYVLCGGIVGLLL), and 321–341 (VAVLCIGCLVIILAANIVGLG).

This sequence belongs to the L-rhamnose transporter (TC 2.A.7.6) family.

The protein localises to the cell inner membrane. It carries out the reaction L-rhamnopyranose(in) + H(+)(in) = L-rhamnopyranose(out) + H(+)(out). Uptake of L-rhamnose across the cytoplasmic membrane with the concomitant transport of protons into the cell (symport system). This chain is L-rhamnose-proton symporter, found in Yersinia pseudotuberculosis serotype O:1b (strain IP 31758).